Reading from the N-terminus, the 1017-residue chain is Centriole and centriolar satellite protein OFD1 (1017 aa).

The LisH domain occupies 69–101 (LIGASNSLVADHLQRCGYEYSLSVFFPESGLAK). 2 coiled-coil regions span residues 188–557 (PHRS…ENEV) and 626–659 (EFIA…RATQ). A mediates homooligomerization region spans residues 609–666 (PPYVNTATEASSPESDFEFIASSTKAKVRELEQEAERLEKAFRTYYQRATQNPSTSPQ). Disordered regions lie at residues 657–676 (ATQN…SVNS), 685–705 (SSSM…QPLG), 721–749 (GSVV…RSLD), and 769–801 (LDRV…SFSG). Residues Ser-664, Ser-670, Ser-687, Ser-722, Ser-737, Ser-747, Ser-791, and Ser-823 each carry the phosphoserine modification. The segment covering 722 to 740 (SVVSRPRRTSSSTRLSSTP) has biased composition (low complexity). The stretch at 895 to 966 (ELHMKERRQR…AHCENTLEKY (72 aa)) forms a coiled coil. Basic and acidic residues predominate over residues 897–988 (HMKERRQREE…ADKSSKKSGK (92 aa)). Positions 897–1017 (HMKERRQREE…FSHEEPDDMW (121 aa)) are disordered.

Belongs to the OFD1 family. As to quaternary structure, homooligomer. Interacts with LCA5. Interacts with RUVBL1; the interaction is direct and may mediate interaction with the NuA4 histone acetyltransferase complex. Interacts with SDCCAG8; the interaction is direct. Interacts with MAP1LC3B. Interacts with C2CD3; OFD1 may act as a negative regulator of C2CD3. Forms a complex with KIAA0753/OFIP and CEP20/FOR20; the interaction with CEP20 is detected only in the presence of KIAA0753. Interacts with PCM1; this interaction may be mediated by KIAA0753/OFIP. Interacts with TBC1D31; regulates OFD1 activity in cilium assembly. Phosphorylated. Phosphorylation at Ser-737, by the cAMP-dependent protein kinase PKA, triggers ubiquitination and proteasomal degradation of OFD1. Also increases its interaction with TBC1D31 and regulates its function in ciliogenesis. Post-translationally, ubiquitinated by PJA2, upon phosphorylation at Ser-737 by PKA, leads to the proteasomal degradation of OFD1.

Its subcellular location is the cytoplasm. The protein localises to the cytoskeleton. It localises to the microtubule organizing center. The protein resides in the centrosome. It is found in the centriole. Its subcellular location is the centriolar satellite. The protein localises to the cilium basal body. It localises to the nucleus. Component of the centrioles controlling mother and daughter centrioles length. Recruits to the centriole IFT88 and centriole distal appendage-specific proteins including CEP164. Involved in the biogenesis of the cilium, a centriole-associated function. The cilium is a cell surface projection found in many vertebrate cells required to transduce signals important for development and tissue homeostasis. Plays an important role in development by regulating Wnt signaling and the specification of the left-right axis. Only OFD1 localized at the centriolar satellites is removed by autophagy, which is an important step in the ciliogenesis regulation. The polypeptide is Centriole and centriolar satellite protein OFD1 (Ofd1) (Mus musculus (Mouse)).